A 1042-amino-acid chain; its full sequence is Isoleucine--tRNA ligase (1042 aa).

The 'HIGH' region motif lies at 48 to 58 (PFATGLPHFGH). The short motif at 594–598 (KMSKS) is the 'KMSKS' region element. Lys597 is an ATP binding site.

Belongs to the class-I aminoacyl-tRNA synthetase family. IleS type 2 subfamily. As to quaternary structure, monomer. Requires Zn(2+) as cofactor.

It localises to the cytoplasm. The catalysed reaction is tRNA(Ile) + L-isoleucine + ATP = L-isoleucyl-tRNA(Ile) + AMP + diphosphate. In terms of biological role, catalyzes the attachment of isoleucine to tRNA(Ile). As IleRS can inadvertently accommodate and process structurally similar amino acids such as valine, to avoid such errors it has two additional distinct tRNA(Ile)-dependent editing activities. One activity is designated as 'pretransfer' editing and involves the hydrolysis of activated Val-AMP. The other activity is designated 'posttransfer' editing and involves deacylation of mischarged Val-tRNA(Ile). This chain is Isoleucine--tRNA ligase, found in Borrelia garinii subsp. bavariensis (strain ATCC BAA-2496 / DSM 23469 / PBi) (Borreliella bavariensis).